Reading from the N-terminus, the 83-residue chain is Large ribosomal subunit protein eL14 (83 aa).

The protein belongs to the eukaryotic ribosomal protein eL14 family. In terms of assembly, part of the 50S ribosomal subunit.

In Thermococcus kodakarensis (strain ATCC BAA-918 / JCM 12380 / KOD1) (Pyrococcus kodakaraensis (strain KOD1)), this protein is Large ribosomal subunit protein eL14.